The primary structure comprises 235 residues: 2,3,4,5-tetrahydropyridine-2,6-dicarboxylate N-acetyltransferase (235 aa).

This sequence belongs to the transferase hexapeptide repeat family. DapH subfamily.

The catalysed reaction is (S)-2,3,4,5-tetrahydrodipicolinate + acetyl-CoA + H2O = L-2-acetamido-6-oxoheptanedioate + CoA. The protein operates within amino-acid biosynthesis; L-lysine biosynthesis via DAP pathway; LL-2,6-diaminopimelate from (S)-tetrahydrodipicolinate (acetylase route): step 1/3. Catalyzes the transfer of an acetyl group from acetyl-CoA to tetrahydrodipicolinate. This is 2,3,4,5-tetrahydropyridine-2,6-dicarboxylate N-acetyltransferase from Exiguobacterium sp. (strain ATCC BAA-1283 / AT1b).